The primary structure comprises 49 residues: Large ribosomal subunit protein bL33 (49 aa).

This sequence belongs to the bacterial ribosomal protein bL33 family.

This is Large ribosomal subunit protein bL33 from Clostridioides difficile (strain 630) (Peptoclostridium difficile).